Reading from the N-terminus, the 664-residue chain is DNA mismatch repair protein MutL (664 aa).

The protein belongs to the DNA mismatch repair MutL/HexB family.

Functionally, this protein is involved in the repair of mismatches in DNA. It is required for dam-dependent methyl-directed DNA mismatch repair. May act as a 'molecular matchmaker', a protein that promotes the formation of a stable complex between two or more DNA-binding proteins in an ATP-dependent manner without itself being part of a final effector complex. The polypeptide is DNA mismatch repair protein MutL (Clostridium beijerinckii (strain ATCC 51743 / NCIMB 8052) (Clostridium acetobutylicum)).